Reading from the N-terminus, the 468-residue chain is Neuronal acetylcholine receptor subunit alpha-5 (468 aa).

An N-terminal signal peptide occupies residues 1 to 22 (MAARGSGPRALRLLLLVQLVAG). At 23–254 (RCGLAGAAGG…VIKRLPLFYT (232 aa)) the chain is on the extracellular side. N-linked (GlcNAc...) asparagine glycosylation is found at Asn-155, Asn-183, and Asn-229. Residues Cys-170 and Cys-184 are joined by a disulfide bond. A disulfide bridge connects residues Cys-234 and Cys-235. 3 helical membrane passes run 255-275 (LFLI…FYLP), 282-302 (ICLC…IEEI), and 317-337 (LVFT…AINI). At 338–429 (HHRSSSTHNA…WKFIAQVLDR (92 aa)) the chain is on the cytoplasmic side. Residues 430–451 (MFLWTFLFVSIVGSLGLFVPVI) traverse the membrane as a helical segment. Residues 452–468 (YKWANILIPVHIGNANK) lie on the Extracellular side of the membrane.

The protein belongs to the ligand-gated ion channel (TC 1.A.9) family. Acetylcholine receptor (TC 1.A.9.1) subfamily. Alpha-5/CHRNA5 sub-subfamily. As to quaternary structure, neuronal AChR that forms heteropentamers composed of two different type of subunits: alpha and non-alpha (beta). CHRNA5/alpha-5 subunit is only able to form functional nAChRs when co-assembled with another alpha subunit, can be combined to CHRNA4/alpha-4 or CHRNA3/alpha-3 and CHRNB4/beta-4 or CHRNB2/beta-2 to give rise to functional receptors. Interacts with LYPD6.

It localises to the synaptic cell membrane. It is found in the cell membrane. It catalyses the reaction Ca(2+)(in) = Ca(2+)(out). The enzyme catalyses K(+)(in) = K(+)(out). The catalysed reaction is Na(+)(in) = Na(+)(out). With respect to regulation, activated by a myriad of ligands such as acetylcholine, cytisine, nicotine, choline and epibatidine. Functionally, component of neuronal acetylcholine receptors (nAChRs) that function as pentameric, ligand-gated cation channels with high calcium permeability among other activities. nAChRs are excitatory neurotrasnmitter receptors formed by a collection of nAChR subunits known to mediate synaptic transmission in the nervous system and the neuromuscular junction. Each nAchR subunit confers differential attributes to channel properties, including activation, deactivation and desensitization kinetics, pH sensitivity, cation permeability, and binding to allosteric modulators. Has an accessory rather than functional role and is only able to form functional nAChRs when co-assembled with another beta subunit. Participates in pentameric assemblies along with CHRNA3, CHRNA4, CHRNB2 and CHRNB4. Increases receptor sensitivity to acetylcholine and nicotine when associated with CHRNA4 and CHRNB2. Plays a role in nicotine addiction. The chain is Neuronal acetylcholine receptor subunit alpha-5 from Homo sapiens (Human).